We begin with the raw amino-acid sequence, 452 residues long: Exodeoxyribonuclease 7 large subunit (452 aa).

This sequence belongs to the XseA family. Heterooligomer composed of large and small subunits.

It localises to the cytoplasm. The enzyme catalyses Exonucleolytic cleavage in either 5'- to 3'- or 3'- to 5'-direction to yield nucleoside 5'-phosphates.. In terms of biological role, bidirectionally degrades single-stranded DNA into large acid-insoluble oligonucleotides, which are then degraded further into small acid-soluble oligonucleotides. The polypeptide is Exodeoxyribonuclease 7 large subunit (Bacillus cereus (strain B4264)).